Consider the following 622-residue polypeptide: Probable potassium transport system protein Kup 1 (622 aa).

A run of 12 helical transmembrane segments spans residues 11–31, 50–70, 101–121, 137–157, 168–188, 215–235, 247–267, 285–305, 337–357, 366–386, 393–413, and 419–439; these read LTLG…LYAV, ILSI…VTLV, VLLL…VITP, PAFN…LFWV, FFGP…VAQI, FIIL…YADL, WFAV…ALLL, ALLP…QALI, IYLP…VMIF, AYGI…FFVI, PLWL…AFWA, and LFDG…LMIT.

It belongs to the HAK/KUP transporter (TC 2.A.72) family.

The protein localises to the cell inner membrane. The enzyme catalyses K(+)(in) + H(+)(in) = K(+)(out) + H(+)(out). Functionally, transport of potassium into the cell. Likely operates as a K(+):H(+) symporter. The polypeptide is Probable potassium transport system protein Kup 1 (Albidiferax ferrireducens (strain ATCC BAA-621 / DSM 15236 / T118) (Rhodoferax ferrireducens)).